The sequence spans 404 residues: Ubiquitin-like modifier-activating enzyme 5 (404 aa).

Phosphoserine is present on S45. ATP-binding residues include G83, D104, K127, N150, and N184. Positions 226 and 229 each coordinate Zn(2+). C250 serves as the catalytic Glycyl thioester intermediate. C303 and C308 together coordinate Zn(2+). Positions 334-346 match the UFM1-interacting sequence (UIS) motif; sequence IIHEDNEWGIELV. A linker region spans residues 347–377; that stretch reads SEISEEELKKSSGPIPDLPEGIIVAYTVPQK. Residues S358 and S393 each carry the phosphoserine modification. A UFC1-binding sequence (UFC) motif is present at residues 389-404; sequence DSGESLEDLMAKMKNI.

This sequence belongs to the ubiquitin-activating E1 family. UBA5 subfamily. Homodimer; homodimerization is required for UFM1 activation. Interacts (via UIS motif) with UFM1; binds UFM1 via a trans-binding mechanism in which UFM1 interacts with distinct sites in both subunits of the UBA5 homodimer. Interacts (via C-terminus) with UFC1. Interacts (via UIS motif) with GABARAPL2 and, with lower affinity, with GABARAP and GABARAPL1.

Its subcellular location is the cytoplasm. It localises to the nucleus. The protein resides in the endoplasmic reticulum membrane. It is found in the golgi apparatus. Its function is as follows. E1-like enzyme which specifically catalyzes the first step in ufmylation. Activates UFM1 by first adenylating its C-terminal glycine residue with ATP, and thereafter linking this residue to the side chain of a cysteine residue in E1, yielding a UFM1-E1 thioester and free AMP. Activates UFM1 via a trans-binding mechanism, in which UFM1 interacts with distinct sites in both subunits of the UBA5 homodimer. Trans-binding also promotes stabilization of the UBA5 homodimer, and enhances ATP-binding. Transfer of UFM1 from UBA5 to the E2-like enzyme UFC1 also takes place using a trans mechanism. Ufmylation plays a key role in various processes, such as ribosome recycling, response to DNA damage, interferon response or reticulophagy (also called ER-phagy). Ufmylation is essential for erythroid differentiation of both megakaryocytes and erythrocytes. The protein is Ubiquitin-like modifier-activating enzyme 5 of Bos taurus (Bovine).